Here is a 395-residue protein sequence, read N- to C-terminus: Guanine nucleotide-binding protein subunit beta-5 (395 aa).

WD repeat units lie at residues 103–142 (GHGNKVLCMDWCKDKRRIVSSSQDGKVIVWDSFTTNKEHA), 145–184 (MPCTWVMACAYAPSGCAIACGGLDNKCSVYPLTFDKNENM), 193–234 (MHTN…QSFH), 236–278 (HGAD…QAFE), 279–318 (THESDVNSVRYYPSGDAFASGSDDATCRLYDLRADREVAI), 320–362 (SKES…RVSI), and 365–394 (GHENRVSTLRVSPDGTAFCSGSWDHTLRVW).

The protein belongs to the WD repeat G protein beta family. As to quaternary structure, component of a complex composed of RGS9 (isoform RGS9-1), GNB5 and RGS9BP; within this complex, the presence of GNB5 stabilizes both itself and RGS9 and increases RGS9 GTPase-activating protein (GAP) activity. Interacts with RGS7, forming the RGS7-GNB5 complex; within this complex, the presence of GNB5 increases RGS7 GTPase-activating protein (GAP) activity. Interacts with GPR158; promotes the GTPase activator activity of the RGS7-GNB5 complex in absence of glycine, in contrast GTPase activator activity of the RGS7-GNB5 complex is inhibited in presence of glycine. Interacts with RGS6. In terms of tissue distribution, isoform 1 is only detected in retina. Isoform 2 is detected in brain (at protein level). Isoform 2 is detected in brain.

Its subcellular location is the membrane. Enhances GTPase-activating protein (GAP) activity of regulator of G protein signaling (RGS) proteins, such as RGS7 and RGS9, hence involved in the termination of the signaling initiated by the G protein coupled receptors (GPCRs) by accelerating the GTP hydrolysis on the G-alpha subunits, thereby promoting their inactivation. Increases RGS7 GTPase-activating protein (GAP) activity, thereby regulating mood and cognition. Increases RGS9 GTPase-activating protein (GAP) activity, hence contributes to the deactivation of G protein signaling initiated by D(2) dopamine receptors. May play an important role in neuronal signaling, including in the parasympathetic, but not sympathetic, control of heart rate. This chain is Guanine nucleotide-binding protein subunit beta-5 (Gnb5), found in Mus musculus (Mouse).